Here is a 241-residue protein sequence, read N- to C-terminus: Pyridoxine 5'-phosphate synthase (241 aa).

Residue asparagine 7 participates in 3-amino-2-oxopropyl phosphate binding. 9–10 (DH) lines the 1-deoxy-D-xylulose 5-phosphate pocket. Residue arginine 18 coordinates 3-amino-2-oxopropyl phosphate. Histidine 43 functions as the Proton acceptor in the catalytic mechanism. 1-deoxy-D-xylulose 5-phosphate is bound by residues arginine 45 and histidine 50. Glutamate 70 serves as the catalytic Proton acceptor. Threonine 100 is a 1-deoxy-D-xylulose 5-phosphate binding site. The active-site Proton donor is histidine 191. 3-amino-2-oxopropyl phosphate contacts are provided by residues glycine 192 and 213–214 (GH).

It belongs to the PNP synthase family. As to quaternary structure, homooctamer; tetramer of dimers.

The protein resides in the cytoplasm. The catalysed reaction is 3-amino-2-oxopropyl phosphate + 1-deoxy-D-xylulose 5-phosphate = pyridoxine 5'-phosphate + phosphate + 2 H2O + H(+). It functions in the pathway cofactor biosynthesis; pyridoxine 5'-phosphate biosynthesis; pyridoxine 5'-phosphate from D-erythrose 4-phosphate: step 5/5. In terms of biological role, catalyzes the complicated ring closure reaction between the two acyclic compounds 1-deoxy-D-xylulose-5-phosphate (DXP) and 3-amino-2-oxopropyl phosphate (1-amino-acetone-3-phosphate or AAP) to form pyridoxine 5'-phosphate (PNP) and inorganic phosphate. This chain is Pyridoxine 5'-phosphate synthase, found in Solidesulfovibrio magneticus (strain ATCC 700980 / DSM 13731 / RS-1) (Desulfovibrio magneticus).